The primary structure comprises 126 residues: UPF0235 protein C15orf40 homolog (126 aa).

The interval 1-32 is disordered; the sequence is MPKKAGATSKGKNQTKEPETAPPAAGPVATDP. Serine 89 carries the post-translational modification Phosphoserine.

Belongs to the UPF0235 family.

The polypeptide is UPF0235 protein C15orf40 homolog (Mus musculus (Mouse)).